A 131-amino-acid chain; its full sequence is Interleukin-13 (131 aa).

The N-terminal stretch at 1 to 18 is a signal peptide; that stretch reads MALWVTAVLALACLGGLA. N-linked (GlcNAc...) asparagine glycosylation is found at N42, N52, and N75. 2 cysteine pairs are disulfide-bonded: C51-C79 and C67-C93.

The protein belongs to the IL-4/IL-13 family. Interacts with IL13RA2.

The protein resides in the secreted. Its function is as follows. Cytokine that plays important roles in allergic inflammation and immune response to parasite infection. Synergizes with IL2 in regulating interferon-gamma synthesis. Stimulates B-cell proliferation, and activation of eosinophils, basophils, and mast cells. Plays an important role in controlling IL33 activity by modulating the production of transmembrane and soluble forms of interleukin-1 receptor-like 1/IL1RL1. Displays the capacity to antagonize Th1-driven proinflammatory immune response and downregulates synthesis of many proinflammatory cytokines including IL1, IL6, IL10, IL12 and TNF-alpha through a mechanism that partially involves suppression of NF-kappa-B. Also functions on nonhematopoietic cells, including endothelial cells where it induces vascular cell adhesion protein 1/VCAM1, which is important in the recruitment of eosinophils. Exerts its biological effects through its receptors which comprises the IL4R chain and the IL13RA1 chain, to activate JAK1 and TYK2, leading to the activation of STAT6. Aside from IL13RA1, another receptor IL13RA2 acts as a high affinity decoy for IL13 and mediates internalization and depletion of extracellular IL13. This chain is Interleukin-13 (Il13), found in Mus musculus (Mouse).